Consider the following 240-residue polypeptide: Methylthioribulose-1-phosphate dehydratase (240 aa).

Cys99 contacts substrate. Zn(2+) contacts are provided by His116 and His118. The active-site Proton donor/acceptor is the Glu145. Residue His201 coordinates Zn(2+).

This sequence belongs to the aldolase class II family. MtnB subfamily. The cofactor is Zn(2+).

The protein resides in the cytoplasm. It carries out the reaction 5-(methylsulfanyl)-D-ribulose 1-phosphate = 5-methylsulfanyl-2,3-dioxopentyl phosphate + H2O. Its pathway is amino-acid biosynthesis; L-methionine biosynthesis via salvage pathway; L-methionine from S-methyl-5-thio-alpha-D-ribose 1-phosphate: step 2/6. Its function is as follows. Catalyzes the dehydration of methylthioribulose-1-phosphate (MTRu-1-P) into 2,3-diketo-5-methylthiopentyl-1-phosphate (DK-MTP-1-P). The chain is Methylthioribulose-1-phosphate dehydratase from Paracoccidioides brasiliensis (strain Pb18).